The sequence spans 110 residues: Multidrug transporter PA4990 (110 aa).

Helical transmembrane passes span 7-27, 31-51, 58-78, and 85-105; these read LAIA…VAGF, LPLL…VLVM, VVYA…AMFV, and PAAL…QLFS.

This sequence belongs to the drug/metabolite transporter (DMT) superfamily. Small multidrug resistance (SMR) (TC 2.A.7.1) family.

Its subcellular location is the cell membrane. Confers resistance to ethidium bromide, acriflavine and methyl viologen. This is Multidrug transporter PA4990 from Pseudomonas aeruginosa (strain ATCC 15692 / DSM 22644 / CIP 104116 / JCM 14847 / LMG 12228 / 1C / PRS 101 / PAO1).